Here is a 603-residue protein sequence, read N- to C-terminus: MADPKGSTSKEGLEDWCIVEAECSDVENDLEELFDRDTDSDISELLDDNDLEQGNSRELFHQQESKESEEQLQKLKRKYLSPKAVAQLSPRLESITLSPQQKSKRRLFAEQDSGLECTLTNEEDVSSEVEVPALDSQPVAEAQLGTVDIHYKELLRASNNKAILMAKFKEFFGVGFNDLTRQFKSYKTCCNAWVLSVYAVHDDLLESSKQLLQQHCDYIWIRGIGAMSLFLLCFKVGKNRGTVHKLMTAMLNVHEKQIISEPPKLRNVAAALFWYKGAMGSGAFTYGPYPDWIAQQTIVGHQSTEASAFDMSAMVQWAFDNNYLDEADIAYQYAKLAPEDSNAVAWLAHNNQARYVREVASMVRFYKKGQMKEMSMSEWIHTRINEVEGEGHWSTIAKFLRYQQVNFIMFLAALKDMLHSVPKRNCILIYGPPNTGKSAFTMSLIHVLRGRVLSFVNSKSQFWLQPMSECKIALIDDVTDPCWIYMDTYLRNGLDGHVVSLDCKHKAPMQTKFPALLLTSNINVHNEVNYRYLHSRIKGFEFPNPFPMKADNTPEFELTDQSWKSFFTRLWNQLELSDQEDEGENGESQRSFQCSARSANEHL.

The tract at residues 47-68 (DDNDLEQGNSRELFHQQESKES) is disordered. A compositionally biased stretch (basic and acidic residues) spans 58–68 (ELFHQQESKES). Positions 76 to 78 (KRK) match the Nuclear localization signal motif. Phosphoserine; by host is present on residues Ser-81 and Ser-89. The short motif at 88 to 97 (LSPRLESITL) is the Nuclear export signal element. The DNA-binding region stretch occupies residues 143-306 (QLGTVDIHYK…TIVGHQSTEA (164 aa)). In terms of domain architecture, SF3 helicase spans 405–555 (VNFIMFLAAL…FPMKADNTPE (151 aa)). ATP is bound at residue 431 to 438 (GPPNTGKS). Lys-512 is covalently cross-linked (Glycyl lysine isopeptide (Lys-Gly) (interchain with G-Cter in SUMO)). The tract at residues 578–603 (DQEDEGENGESQRSFQCSARSANEHL) is disordered. Residues 586–603 (GESQRSFQCSARSANEHL) are compositionally biased toward polar residues.

The protein belongs to the papillomaviridae E1 protein family. In terms of assembly, can form hexamers. Interacts with E2 protein; this interaction increases E1 DNA binding specificity. Interacts with host DNA polymerase subunit POLA2. Interacts with host single stranded DNA-binding protein RPA1. Interacts with host TOP1; this interaction stimulates the enzymatic activity of TOP1. Phosphorylated. Post-translationally, sumoylated.

It is found in the host nucleus. The enzyme catalyses Couples ATP hydrolysis with the unwinding of duplex DNA by translocating in the 3'-5' direction.. It catalyses the reaction ATP + H2O = ADP + phosphate + H(+). Functionally, ATP-dependent DNA 3'-5' helicase required for initiation of viral DNA replication. It forms a complex with the viral E2 protein. The E1-E2 complex binds to the replication origin which contains binding sites for both proteins. During the initial step, a dimer of E1 interacts with a dimer of protein E2 leading to a complex that binds the viral origin of replication with high specificity. Then, a second dimer of E1 displaces the E2 dimer in an ATP-dependent manner to form the E1 tetramer. Following this, two E1 monomers are added to each half of the site, which results in the formation of two E1 trimers on the viral ori. Subsequently, two hexamers will be created. The double hexamer acts as a bi-directional helicase machinery and unwinds the viral DNA and then recruits the host DNA polymerase to start replication. This is Replication protein E1 from Human papillomavirus 21.